Here is a 2316-residue protein sequence, read N- to C-terminus: Receptor-type tyrosine-protein phosphatase zeta (2316 aa).

The signal sequence occupies residues 1 to 24 (MRILQSFLACVQLLCVCRLDWAYG). Residues 25–1637 (YYRQQRKLVE…LAEGLESEKK (1613 aa)) lie on the Extracellular side of the membrane. An Alpha-carbonic anhydrase domain is found at 36-300 (IGWSYTGALN…KFSRQVFSSY (265 aa)). 2 cysteine pairs are disulfide-bonded: C56–C240 and C133–C264. N105, N134, N223, N232, N324, N381, and N497 each carry an N-linked (GlcNAc...) asparagine glycan. The region spanning 314-413 (EPENVQADPE…LIVDMPTEDA (100 aa)) is the Fibronectin type-III domain. Disordered stretches follow at residues 433–499 (YGKG…LNTS) and 518–537 (LPSQ…TSAS). N552 carries N-linked (GlcNAc...) asparagine glycosylation. A phosphoserine mark is found at S572 and S576. Disordered regions lie at residues 586 to 624 (KLDS…TPEA) and 636 to 720 (RNAL…EMPH). Residues 592 to 602 (DDSSGSSPASS) show a composition bias toward low complexity. S595 is a glycosylation site (O-linked (Xyl...) (chondroitin sulfate) serine). Residues 603–621 (TVPFSTDNLSHGYTSSSDT) show a composition bias toward polar residues. N610 carries N-linked (GlcNAc...) asparagine glycosylation. Residue S645 is modified to Phosphoserine; alternate. S645 carries O-linked (Xyl...) (chondroitin sulfate) serine; alternate glycosylation. A Phosphoserine modification is found at S647. Residues 666 to 675 (TDLTTQSETG) show a composition bias toward polar residues. An N-linked (GlcNAc...) asparagine glycan is attached at N685. The segment covering 699–711 (ETFSPDATASRGP) has biased composition (polar residues). N786 carries an N-linked (GlcNAc...) asparagine glycan. Residue S1005 is glycosylated (O-linked (Xyl...) (chondroitin sulfate) serine). N-linked (GlcNAc...) asparagine glycosylation is found at N1025 and N1058. Disordered stretches follow at residues 1141-1172 (QASG…SHPS), 1204-1228 (KTAL…SSSS), 1401-1521 (LLPS…DGRE), and 1545-1622 (TSDE…NSSH). A compositionally biased stretch (polar residues) spans 1152-1172 (LSTNSEPALSDTASSEVSHPS). Residues 1401 to 1413 (LLPSKATSKPTHS) are compositionally biased toward polar residues. Residues 1425-1439 (EDGDDYDDDDYDDID) are compositionally biased toward acidic residues. A glycan (N-linked (GlcNAc...) asparagine) is linked at N1463. Residues 1464 to 1478 (DSDTQESSLVDQSDP) show a composition bias toward polar residues. Residues S1550 and S1552 are each glycosylated (O-linked (Xyl...) (chondroitin sulfate) serine). 2 stretches are compositionally biased toward polar residues: residues 1555-1569 (GTSD…STDF) and 1595-1609 (PRSS…HSGV). The N-linked (GlcNAc...) asparagine glycan is linked to N1563. A compositionally biased stretch (low complexity) spans 1610-1621 (SNSSEAEASNSS). N1611 and N1619 each carry an N-linked (GlcNAc...) asparagine glycan. The chain crosses the membrane as a helical span at residues 1638–1663 (AVIPLVIVSALTFICLVVLVGILIYW). At 1664 to 2316 (RKCFQTAHFY…NIAESLESLV (653 aa)) the chain is on the cytoplasmic side. Residues T1685 and T1688 each carry the phosphothreonine modification. Tyrosine-protein phosphatase domains follow at residues 1718–1993 (FTEE…LVEA) and 2024–2283 (LEKQ…VLSL). Substrate is bound by residues D1902, 1934 to 1940 (CSAGVGR), and Q1978. The active-site Phosphocysteine intermediate is the C1934. Residue S2056 is modified to Phosphoserine.

Belongs to the protein-tyrosine phosphatase family. Receptor class 5 subfamily. In terms of assembly, interacts with tenascin. Interacts with N-CAM and NG-CAM. The carbonic-anhydrase like domain interacts with CNTN1 (contactin). Interacts with PTN. Interaction with PTN promotes formation of homooligomers; oligomerization impairs phosphatase activity. Interacts (via chondroitin sulfate chains) with MDK (via C-terminal); this interaction is inhibited by PTN; this interaction promotes neuronal migration. Nervous tissue specific.

It localises to the cell membrane. The protein localises to the secreted. It catalyses the reaction O-phospho-L-tyrosyl-[protein] + H2O = L-tyrosyl-[protein] + phosphate. Functionally, protein tyrosine phosphatase that negatively regulates oligodendrocyte precursor proliferation in the embryonic spinal cord. Required for normal differentiation of the precursor cells into mature, fully myelinating oligodendrocytes. May play a role in protecting oligondendrocytes against apoptosis. May play a role in the establishment of contextual memory, probably via the dephosphorylation of proteins that are part of important signaling cascades. Isoform 3 (phosphacan), previously designated 3F8 chondroitin sulfate proteoglycan or 3H1 keratan sulfate proteoglycan depending on the glycosylation status, is a soluble nervous tissue-specific proteoglycan. It is synthesized by glia and binds to neurons and to the neural cell adhesion molecules tenascin, N-CAM or NG-CAM but not to laminin and fibronectin. Phosphacan acts as a potent inhibitor of cell adhesion and neurite outgrowth. In Rattus norvegicus (Rat), this protein is Receptor-type tyrosine-protein phosphatase zeta (Ptprz1).